The primary structure comprises 437 residues: GTPase Der (437 aa).

2 EngA-type G domains span residues 3 to 167 (ALVA…PAEN) and 177 to 353 (PRIA…AHRS). Residues 9–16 (GRPNVGKS), 56–60 (DTGGW), 119–122 (NKVD), 183–190 (GRPNAGKS), 230–234 (DTAGI), and 295–298 (NKWD) each bind GTP. Residues 354-437 (TRIPTHKLNE…TPINIFIREK (84 aa)) enclose the KH-like domain.

This sequence belongs to the TRAFAC class TrmE-Era-EngA-EngB-Septin-like GTPase superfamily. EngA (Der) GTPase family. As to quaternary structure, associates with the 50S ribosomal subunit.

In terms of biological role, GTPase that plays an essential role in the late steps of ribosome biogenesis. The sequence is that of GTPase Der from Porphyromonas gingivalis (strain ATCC BAA-308 / W83).